Consider the following 68-residue polypeptide: Large ribosomal subunit protein bL32 (68 aa).

It belongs to the bacterial ribosomal protein bL32 family.

This chain is Large ribosomal subunit protein bL32, found in Orientia tsutsugamushi (strain Boryong) (Rickettsia tsutsugamushi).